Reading from the N-terminus, the 357-residue chain is Dihydroorotate dehydrogenase (quinone) (357 aa).

FMN-binding positions include 65-69 (AGLDK) and Thr89. A substrate-binding site is contributed by Lys69. A substrate-binding site is contributed by 114–118 (NRFGF). 2 residues coordinate FMN: Asn156 and Asn189. A substrate-binding site is contributed by Asn189. The Nucleophile role is filled by Ser192. Residue Asn194 coordinates substrate. Lys234 and Thr262 together coordinate FMN. Position 263–264 (263–264 (NT)) interacts with substrate. FMN-binding positions include Gly285, Gly314, and 335 to 336 (YT).

This sequence belongs to the dihydroorotate dehydrogenase family. Type 2 subfamily. In terms of assembly, monomer. Requires FMN as cofactor.

The protein localises to the cell membrane. The catalysed reaction is (S)-dihydroorotate + a quinone = orotate + a quinol. Its pathway is pyrimidine metabolism; UMP biosynthesis via de novo pathway; orotate from (S)-dihydroorotate (quinone route): step 1/1. Its function is as follows. Catalyzes the conversion of dihydroorotate to orotate with quinone as electron acceptor. This is Dihydroorotate dehydrogenase (quinone) from Albidiferax ferrireducens (strain ATCC BAA-621 / DSM 15236 / T118) (Rhodoferax ferrireducens).